A 527-amino-acid chain; its full sequence is Phospholipase A1-Igamma3, chloroplastic (527 aa).

A chloroplast-targeting transit peptide spans M1–S52. Residues T55–T65 show a composition bias toward low complexity. The interval T55–E82 is disordered. The span at H66–K75 shows a compositional bias: basic and acidic residues. Residues G300–G304 carry the GXSXG motif. Catalysis depends on S302, which acts as the Acyl-ester intermediate. Residues D366 and H423 each act as charge relay system in the active site.

It belongs to the AB hydrolase superfamily. Lipase family. Highly expressed in flowers. Lower levels in seedlings, leaves and stems.

The protein localises to the plastid. It is found in the chloroplast. The enzyme catalyses 1,2-dihexadecanoyl-sn-glycero-3-phosphocholine + H2O = 2-hexadecanoyl-sn-glycero-3-phosphocholine + hexadecanoate + H(+). It catalyses the reaction a 1,2-diacyl-3-O-(beta-D-galactosyl)-sn-glycerol + H2O = an acyl-3-O-(beta-D-galactosyl)-sn-glycerol + a fatty acid + H(+). It carries out the reaction a 1,2-diacyl-3-O-[alpha-D-galactosyl-(1-&gt;6)-beta-D-galactosyl]-sn-glycerol + H2O = acyl-3-O-[alpha-D-galactosyl-(1-&gt;6)-beta-D-galactosyl]-sn-glycerol + a fatty acid + H(+). Functionally, acylhydrolase that catalyzes the hydrolysis of phosphatidylcholine at the sn-1 position. Moderate activity toward phosphatidylcholine (PC), monogalactosyldiacylglycerol (MGDG), digalactosyldiacylglycerol (DGDG) and triacylglycerol (TAG). The sequence is that of Phospholipase A1-Igamma3, chloroplastic from Arabidopsis thaliana (Mouse-ear cress).